Reading from the N-terminus, the 293-residue chain is Fructokinase (293 aa).

Residue Thr-133 coordinates ATP. The Zn(2+) site is built by His-156, Cys-174, His-177, and Cys-180. Residues Pro-188 and 236–240 (GVMAQ) contribute to the ATP site.

Belongs to the ROK (NagC/XylR) family. The cofactor is Mg(2+).

The catalysed reaction is D-fructose + ATP = D-fructose 6-phosphate + ADP + H(+). With respect to regulation, inhibition by zinc ions. This chain is Fructokinase (scrK), found in Streptococcus mutans serotype c (strain ATCC 700610 / UA159).